Consider the following 207-residue polypeptide: Peptidyl-tRNA hydrolase (207 aa).

Tyr-30 is a binding site for tRNA. The Proton acceptor role is filled by His-35. Positions 81, 83, and 129 each coordinate tRNA.

It belongs to the PTH family. As to quaternary structure, monomer.

The protein resides in the cytoplasm. It carries out the reaction an N-acyl-L-alpha-aminoacyl-tRNA + H2O = an N-acyl-L-amino acid + a tRNA + H(+). Hydrolyzes ribosome-free peptidyl-tRNAs (with 1 or more amino acids incorporated), which drop off the ribosome during protein synthesis, or as a result of ribosome stalling. Functionally, catalyzes the release of premature peptidyl moieties from peptidyl-tRNA molecules trapped in stalled 50S ribosomal subunits, and thus maintains levels of free tRNAs and 50S ribosomes. This chain is Peptidyl-tRNA hydrolase, found in Bordetella avium (strain 197N).